We begin with the raw amino-acid sequence, 518 residues long: Lysine 5,6-aminomutase alpha subunit (518 aa).

Residues arginine 184 to serine 189, serine 238, tyrosine 263, arginine 268, and asparagine 299 each bind pyridoxal 5'-phosphate.

It belongs to the KamD family. As to quaternary structure, heterotetramer of 2 alpha and 2 beta subunits. Requires adenosylcob(III)alamin as cofactor. The cofactor is pyridoxal 5'-phosphate.

The enzyme catalyses (3S)-3,6-diaminohexanoate = (3S,5S)-3,5-diaminohexanoate. It carries out the reaction D-lysine = (2R,5S)-2,5-diaminohexanoate. Its pathway is amino-acid degradation; L-lysine degradation via acetate pathway. In terms of biological role, catalyzes the migration of the L-beta-lysine and D-lysine epsilon amino group to the delta carbon to produce 3,5-diaminohexanoate and 2,5-diaminohexanoate, respectively. The sequence is that of Lysine 5,6-aminomutase alpha subunit from Fusobacterium nucleatum subsp. nucleatum (strain ATCC 25586 / DSM 15643 / BCRC 10681 / CIP 101130 / JCM 8532 / KCTC 2640 / LMG 13131 / VPI 4355).